A 723-amino-acid chain; its full sequence is Transient receptor potential cation channel subfamily V member 5 (723 aa).

Over 1–320 the chain is Cytoplasmic; that stretch reads MGAKTPWIQL…SLKWKKYGQP (320 aa). 6 ANK repeats span residues 38–68, 72–101, 110–139, 156–185, 189–222, and 232–261; these read IWES…DFRQ, LGET…YLVT, VGQT…SASA, YGEH…DIRA, LGNT…GDHL, and QGLT…RIQW. A helical transmembrane segment spans residues 321–341; it reads YFCLLGALYIFYMVCFTTCCV. The Extracellular portion of the chain corresponds to 342-378; that stretch reads YRPLKFRDANRTHVRDNTIMEQKSLQEAYVTYQDKIR. The helical transmembrane segment at 379-401 threads the bilayer; it reads LVGELVTVIGAVIILLLEIPDIF. Residues 402–412 are Extracellular-facing; it reads RVGASRYFGQT. The helical transmembrane segment at 413 to 435 threads the bilayer; the sequence is VLGGPFHVIIITYASLVLLTMAM. Over 436 to 441 the chain is Cytoplasmic; it reads RLTNVN. A helical membrane pass occupies residues 442-462; sequence GEVVPMSMALVLGWCSVMYFA. Over 463–485 the chain is Extracellular; that stretch reads RGFQMLGPFTIMIQKMIFGDLLR. Residues 486–506 form a helical membrane-spanning segment; it reads FCWLMAMVILGFASAFYIIFQ. Positions 517–537 form an intramembrane region, pore-forming; it reads SDYPTAMFSTFELFLTIIDGP. Aspartate 535 is a Ca(2+) binding site. The helical transmembrane segment at 550–570 threads the bilayer; the sequence is VTYATFAIIATLLMLNLFIAM. At 571–723 the chain is on the cytoplasmic side; the sequence is MGDTHWRVAQ…EGDGEEIYQF (153 aa). Residues 591–595 form an interaction with S100A10 region; the sequence is VATTV. The tract at residues 643 to 646 is involved in Ca(2+)-dependent inactivation; it reads AFKS. Positions 651–673 are disordered; it reads EVQEQLSEKQPSGTETGTLARGS. A compositionally biased stretch (polar residues) spans 654 to 667; that stretch reads EQLSEKQPSGTETG. Residue threonine 678 is modified to Phosphothreonine. Position 682 is a phosphoserine (serine 682). Positions 693–723 are involved in Ca(2+)-dependent inactivation; that stretch reads RGWEILRRNTLGHLNLGLDPGEGDGEEIYQF.

It belongs to the transient receptor (TC 1.A.4) family. TrpV subfamily. TRPV5 sub-subfamily. In terms of assembly, homotetramer and probably heterotetramer with TRPV6. Interacts with TRPV6. Interacts with S100A10 and probably with the ANAX2-S100A10 heterotetramer. The interaction with S100A10 is required for the trafficking to the plasma membrane. Interacts with calmodulin. Interacts with BSPRY, which results in its inactivation. Post-translationally, glycosylated. As to expression, detected in kidney cortex (at protein level).

Its subcellular location is the apical cell membrane. It carries out the reaction Ca(2+)(in) = Ca(2+)(out). Activated by WNK3. Constitutively active calcium selective cation channel thought to be involved in Ca(2+) reabsorption in kidney and intestine. Required for normal Ca(2+) reabsorption in the kidney distal convoluted tubules. The channel is activated by low internal calcium level and the current exhibits an inward rectification. A Ca(2+)-dependent feedback regulation includes fast channel inactivation and slow current decay. Heteromeric assembly with TRPV6 seems to modify channel properties. TRPV5-TRPV6 heteromultimeric concatemers exhibit voltage-dependent gating. The protein is Transient receptor potential cation channel subfamily V member 5 (Trpv5) of Mus musculus (Mouse).